A 1497-amino-acid chain; its full sequence is DNA-directed RNA polymerase subunit beta (1497 aa).

The protein belongs to the RNA polymerase beta chain family. The RNAP catalytic core consists of 2 alpha, 1 beta, 1 beta' and 1 omega subunit. When a sigma factor is associated with the core the holoenzyme is formed, which can initiate transcription.

The enzyme catalyses RNA(n) + a ribonucleoside 5'-triphosphate = RNA(n+1) + diphosphate. Functionally, DNA-dependent RNA polymerase catalyzes the transcription of DNA into RNA using the four ribonucleoside triphosphates as substrates. In Trichlorobacter lovleyi (strain ATCC BAA-1151 / DSM 17278 / SZ) (Geobacter lovleyi), this protein is DNA-directed RNA polymerase subunit beta.